Consider the following 112-residue polypeptide: DNA-binding protein TK1278 (112 aa).

This sequence belongs to the PDCD5 family.

This chain is DNA-binding protein TK1278, found in Thermococcus kodakarensis (strain ATCC BAA-918 / JCM 12380 / KOD1) (Pyrococcus kodakaraensis (strain KOD1)).